The primary structure comprises 264 residues: tRNA pseudouridine synthase A (264 aa).

Aspartate 51 functions as the Nucleophile in the catalytic mechanism. Tyrosine 109 is a substrate binding site.

It belongs to the tRNA pseudouridine synthase TruA family. Homodimer.

The enzyme catalyses uridine(38/39/40) in tRNA = pseudouridine(38/39/40) in tRNA. Functionally, formation of pseudouridine at positions 38, 39 and 40 in the anticodon stem and loop of transfer RNAs. This is tRNA pseudouridine synthase A from Vibrio parahaemolyticus serotype O3:K6 (strain RIMD 2210633).